We begin with the raw amino-acid sequence, 310 residues long: Malate dehydrogenase (310 aa).

Residues 7–12 and Asp-32 each bind NAD(+); that span reads GAGNVG. Substrate is bound by residues Arg-81 and Arg-87. Residues Asn-94 and 117–119 contribute to the NAD(+) site; that span reads VSN. Substrate is bound by residues Asn-119 and Arg-150. His-174 acts as the Proton acceptor in catalysis.

Belongs to the LDH/MDH superfamily. MDH type 3 family.

It catalyses the reaction (S)-malate + NAD(+) = oxaloacetate + NADH + H(+). Functionally, catalyzes the reversible oxidation of malate to oxaloacetate. The sequence is that of Malate dehydrogenase from Chloroherpeton thalassium (strain ATCC 35110 / GB-78).